A 361-amino-acid chain; its full sequence is MERITVTLGERSYPITIAAGLFNDPASFWPLTRGDSAMLVTNDRLAPLYLESLCERLTQAGVKVDRVVLPDGEQNKSLTVLDQVFTALLAKSHGRDTTLIALGGGVIGDLAGFAAASYQRGVRFIQAPTTLLSQVDSSVGGKTAVNHSLGKNMIGAFYQPASVVIDLDCLNTLPRRELSSGLAEVIKYGIILDAAFFAWLEDNLEALLALEPQALAYCIRRCCELKADVVAADEREQGQRALLNLGHTYGHAIETHMGYGNWLHGEAVAAGMMMAVRAARRLGQFSDADAERVSALLQRAGLTMSGPAEMAPEDYLPHMMRDKKVIAGRLRLVLPVTLGNAEVRTGVADDMVVASIKDCQA.

Residues 71-76 (DGEQNK), 105-109 (GVIGD), 129-130 (TT), Lys-142, Lys-151, and 169-172 (CLNT) contribute to the NAD(+) site. Zn(2+) is bound by residues Glu-184, His-247, and His-264.

This sequence belongs to the sugar phosphate cyclases superfamily. Dehydroquinate synthase family. Requires Co(2+) as cofactor. Zn(2+) serves as cofactor. The cofactor is NAD(+).

The protein resides in the cytoplasm. It carries out the reaction 7-phospho-2-dehydro-3-deoxy-D-arabino-heptonate = 3-dehydroquinate + phosphate. The protein operates within metabolic intermediate biosynthesis; chorismate biosynthesis; chorismate from D-erythrose 4-phosphate and phosphoenolpyruvate: step 2/7. In terms of biological role, catalyzes the conversion of 3-deoxy-D-arabino-heptulosonate 7-phosphate (DAHP) to dehydroquinate (DHQ). The polypeptide is 3-dehydroquinate synthase (Sodalis glossinidius (strain morsitans)).